Reading from the N-terminus, the 993-residue chain is Isoleucine--tRNA ligase, mitochondrial (993 aa).

The N-terminal 29 residues, 1–29 (SLWGTPRLPCSPGWQGATKRLLVRSVSGA), are a transit peptide targeting the mitochondrion. An N6-acetyllysine; alternate modification is found at Lys55. N6-succinyllysine; alternate is present on Lys55. Positions 97 to 107 (PYANGDPHVGH) match the 'HIGH' region motif. Position 170 is an N6-acetyllysine (Lys170). At Lys175 the chain carries N6-succinyllysine. Position 214 is an N6-acetyllysine (Lys214). The residue at position 222 (Lys222) is an N6-acetyllysine; alternate. N6-succinyllysine; alternate is present on Lys222. 2 positions are modified to N6-succinyllysine: Lys460 and Lys481. Positions 645 and 648 each coordinate ATP. A 'KMSKS' region motif is present at residues 645 to 649 (KMSKS). The residue at position 706 (Lys706) is an N6-acetyllysine. 2 positions are modified to N6-acetyllysine; alternate: Lys756 and Lys762. N6-succinyllysine; alternate is present on residues Lys756 and Lys762.

This sequence belongs to the class-I aminoacyl-tRNA synthetase family.

The protein resides in the mitochondrion matrix. It catalyses the reaction tRNA(Ile) + L-isoleucine + ATP = L-isoleucyl-tRNA(Ile) + AMP + diphosphate. Its function is as follows. Aminoacyl-tRNA synthetase that catalyzes the specific attachment of isoleucine to its cognate tRNA (tRNA(Ile)). This Macaca fascicularis (Crab-eating macaque) protein is Isoleucine--tRNA ligase, mitochondrial (IARS2).